Consider the following 309-residue polypeptide: Curved DNA-binding protein (309 aa).

The 65-residue stretch at 5 to 69 (DYYAILGVKP…ERRAEYDQLR (65 aa)) folds into the J domain.

The protein localises to the cytoplasm. It is found in the nucleoid. In terms of biological role, DNA-binding protein that preferentially recognizes a curved DNA sequence. It is probably a functional analog of DnaJ; displays overlapping activities with DnaJ, but functions under different conditions, probably acting as a molecular chaperone in an adaptive response to environmental stresses other than heat shock. Lacks autonomous chaperone activity; binds native substrates and targets them for recognition by DnaK. Its activity is inhibited by the binding of CbpM. In Serratia proteamaculans (strain 568), this protein is Curved DNA-binding protein.